The primary structure comprises 173 residues: CKLF-like MARVEL transmembrane domain-containing protein 8 (173 aa).

One can recognise an MARVEL domain in the interval 36-168; it reads FLRTLPGLLI…NTYFSFIAWR (133 aa). 4 helical membrane-spanning segments follow: residues 40–60, 70–90, 105–125, and 147–167; these read LPGL…TLIA, FGWV…FLII, TTVG…AAIV, and FFAF…FIAW.

Belongs to the chemokine-like factor family.

It is found in the membrane. The protein is CKLF-like MARVEL transmembrane domain-containing protein 8 (CMTM8) of Bos taurus (Bovine).